A 114-amino-acid chain; its full sequence is MSLWLLLLACLLTCLGQVAQKCAVENWRGADLSWSRKWRSPWLWLALFALGSGLLVWLLVLQRLPVSVAYPMLSLNFVIITLIARFVFKEPVDVQHWFGVLLVIGGVALLGQQS.

Residues 39 to 112 (RSPWLWLALF…VIGGVALLGQ (74 aa)) enclose the EamA domain. The next 3 helical transmembrane spans lie at 41–61 (PWLWLALFALGSGLLVWLLVL), 64–84 (LPVSVAYPMLSLNFVIITLIA), and 91–111 (PVDVQHWFGVLLVIGGVALLG).

This sequence belongs to the ArnE family. In terms of assembly, heterodimer of ArnE and ArnF.

Its subcellular location is the cell inner membrane. Its pathway is bacterial outer membrane biogenesis; lipopolysaccharide biosynthesis. Functionally, translocates 4-amino-4-deoxy-L-arabinose-phosphoundecaprenol (alpha-L-Ara4N-phosphoundecaprenol) from the cytoplasmic to the periplasmic side of the inner membrane. This chain is Probable 4-amino-4-deoxy-L-arabinose-phosphoundecaprenol flippase subunit ArnE, found in Pseudomonas fluorescens (strain Pf0-1).